The following is a 190-amino-acid chain: CASP-like protein 5A3 (190 aa).

2 stretches are compositionally biased toward low complexity: residues 1 to 12 (MRASRPAVHPVE) and 20 to 31 (AAAEGPEAQVEG). A disordered region spans residues 1–31 (MRASRPAVHPVEAAPPPPAAAAEGPEAQVEG). At 1–50 (MRASRPAVHPVEAAPPPPAAAAEGPEAQVEGAAHPRGVRMKDPPGAPGTP) the chain is on the cytoplasmic side. A helical membrane pass occupies residues 51–71 (AGLGLRLAQAFFAAAALAVMA). At 72–81 (STNDFPSVSA) the chain is on the extracellular side. Residues 82–102 (FSYLVAAAILQCLWSLLLAFV) traverse the membrane as a helical segment. Over 103–126 (DIYALLVKRSLRNARAVCIFTIGD) the chain is Cytoplasmic. A helical transmembrane segment spans residues 127 to 147 (GITGTITLGAACASAGITVLI). At 148–164 (GNDLNICAENHCASFET) the chain is on the extracellular side. The helical transmembrane segment at 165-185 (ATALAFISWFALAPSCILNFW) threads the bilayer. At 186–190 (SMASR) the chain is on the cytoplasmic side.

It belongs to the Casparian strip membrane proteins (CASP) family. As to quaternary structure, homodimer and heterodimers.

It is found in the cell membrane. This chain is CASP-like protein 5A3, found in Zea mays (Maize).